Reading from the N-terminus, the 512-residue chain is Serine/threonine-protein kinase SSN3 (512 aa).

Disordered regions lie at residues 1–22 (MNNH…DRPW) and 75–94 (AEVS…TGSM). The Protein kinase domain occupies 106–455 (YKVVGFISSG…AAAALQHPFF (350 aa)). ATP-binding positions include 112-120 (ISSGTYGRV) and lysine 136. The Proton acceptor role is filled by aspartate 238. Disordered regions lie at residues 368-388 (QPPI…RQAA) and 476-512 (RRVS…VKEG). The span at 373–382 (HGGHHGHHYQ) shows a compositional bias: basic residues. Basic and acidic residues-rich tracts occupy residues 476-485 (RRVSQDDNDI) and 497-512 (GLPD…VKEG).

This sequence belongs to the protein kinase superfamily. CMGC Ser/Thr protein kinase family. CDC2/CDKX subfamily. Component of the SRB8-11 complex, a regulatory module of the Mediator complex. Mg(2+) is required as a cofactor.

It localises to the nucleus. It carries out the reaction L-seryl-[protein] + ATP = O-phospho-L-seryl-[protein] + ADP + H(+). The enzyme catalyses L-threonyl-[protein] + ATP = O-phospho-L-threonyl-[protein] + ADP + H(+). The catalysed reaction is [DNA-directed RNA polymerase] + ATP = phospho-[DNA-directed RNA polymerase] + ADP + H(+). Its function is as follows. Component of the SRB8-11 complex. The SRB8-11 complex is a regulatory module of the Mediator complex which is itself involved in regulation of basal and activated RNA polymerase II-dependent transcription. The SRB8-11 complex may be involved in the transcriptional repression of a subset of genes regulated by Mediator. It may inhibit the association of the Mediator complex with RNA polymerase II to form the holoenzyme complex. The SRB8-11 complex phosphorylates the C-terminal domain (CTD) of the largest subunit of RNA polymerase II. This Chaetomium globosum (strain ATCC 6205 / CBS 148.51 / DSM 1962 / NBRC 6347 / NRRL 1970) (Soil fungus) protein is Serine/threonine-protein kinase SSN3 (SSN3).